The following is a 479-amino-acid chain: BURP domain-containing protein 4 (479 aa).

A signal peptide spans 1–46 (MVGKGNECAAARRRFSLRAAAASSSSSSFLPCLLLAAALSAGCCRA). The interval 158-177 (RADGPPKQPATFPASPNGEK) is disordered. Positions 254 to 479 (LFLMKKLHPG…PQGYVLWLAN (226 aa)) constitute a BURP domain. An N-linked (GlcNAc...) asparagine glycan is attached at Asn-445.

As to expression, expressed in stamen.

The chain is BURP domain-containing protein 4 (BURP4) from Oryza sativa subsp. japonica (Rice).